Reading from the N-terminus, the 324-residue chain is NADH-ubiquinone oxidoreductase chain 1 (324 aa).

Helical transmembrane passes span 9–29 (LINPLAYIVPVLLAVAFLTLI), 75–95 (FLFLAAPVLALTLAMTLWAPM), 106–126 (LGILFILALSSLAVYSILGSG), 146–166 (ISYEVSLGLILLSVIIFSGGY), 177–197 (SIWLLIPAWPLAAMWYISTLA), 228–248 (LFFLAEYANILLMNTLSAVLF), 259–279 (ELTTINLMTKAALLSIMFLWV), and 299–319 (FLPLTLAFVLWHTALPIALAG).

This sequence belongs to the complex I subunit 1 family.

The protein resides in the mitochondrion inner membrane. It catalyses the reaction a ubiquinone + NADH + 5 H(+)(in) = a ubiquinol + NAD(+) + 4 H(+)(out). Functionally, core subunit of the mitochondrial membrane respiratory chain NADH dehydrogenase (Complex I) that is believed to belong to the minimal assembly required for catalysis. Complex I functions in the transfer of electrons from NADH to the respiratory chain. The immediate electron acceptor for the enzyme is believed to be ubiquinone. In Cyprinus carpio (Common carp), this protein is NADH-ubiquinone oxidoreductase chain 1 (MT-ND1).